Here is a 245-residue protein sequence, read N- to C-terminus: Orotidine 5'-phosphate decarboxylase (245 aa).

Substrate is bound by residues Asp22, Lys44, 71–80 (DLKFHDIPNT), Thr131, Arg192, Gln201, Gly221, and Arg222. Catalysis depends on Lys73, which acts as the Proton donor.

The protein belongs to the OMP decarboxylase family. Type 1 subfamily. Homodimer.

The enzyme catalyses orotidine 5'-phosphate + H(+) = UMP + CO2. The protein operates within pyrimidine metabolism; UMP biosynthesis via de novo pathway; UMP from orotate: step 2/2. In terms of biological role, catalyzes the decarboxylation of orotidine 5'-monophosphate (OMP) to uridine 5'-monophosphate (UMP). In Escherichia coli O81 (strain ED1a), this protein is Orotidine 5'-phosphate decarboxylase.